We begin with the raw amino-acid sequence, 467 residues long: Keratin, type 1 cytoskeletal 11 (467 aa).

The interval Met-1–Ser-100 is head. The span at Ser-12–Ser-30 shows a compositional bias: low complexity. Residues Ser-12–Leu-32 are disordered. The tract at residues Gly-101–Tyr-137 is coil 1A. Residues Gly-101–Ser-413 enclose the IF rod domain. The interval Glu-138–Ile-156 is linker 1. Residues Ala-157–Arg-248 are coil 1B. The interval Ser-249 to Thr-268 is linker 12. The interval Lys-269–Ser-416 is coil 2. Residues Asp-409–Val-430 form a disordered region. The tract at residues Ser-417–Gln-463 is tail.

The protein belongs to the intermediate filament family. In terms of assembly, heterotetramer of two type I and two type II keratins. Expressed in the outermost cell layers of skin epidermis (at protein level).

The polypeptide is Keratin, type 1 cytoskeletal 11 (Protopterus aethiopicus (Marbled lungfish)).